A 197-amino-acid chain; its full sequence is Putative peptidyl-prolyl cis-trans isomerase (197 aa).

Positions 14 to 195 (GEIKVVMHTN…HDVVIESIDV (182 aa)) constitute a PPIase cyclophilin-type domain.

This sequence belongs to the cyclophilin-type PPIase family.

It carries out the reaction [protein]-peptidylproline (omega=180) = [protein]-peptidylproline (omega=0). Its function is as follows. PPIases accelerate the folding of proteins. It catalyzes the cis-trans isomerization of proline imidic peptide bonds in oligopeptides. The protein is Putative peptidyl-prolyl cis-trans isomerase of Staphylococcus aureus (strain COL).